A 209-amino-acid polypeptide reads, in one-letter code: 3-demethoxyubiquinol 3-hydroxylase (209 aa).

Residues E58, E88, H91, E140, E172, and H175 each contribute to the Fe cation site.

The protein belongs to the COQ7 family. Fe cation is required as a cofactor.

It is found in the cell membrane. The enzyme catalyses a 5-methoxy-2-methyl-3-(all-trans-polyprenyl)benzene-1,4-diol + AH2 + O2 = a 3-demethylubiquinol + A + H2O. It functions in the pathway cofactor biosynthesis; ubiquinone biosynthesis. Its function is as follows. Catalyzes the hydroxylation of 2-nonaprenyl-3-methyl-6-methoxy-1,4-benzoquinol during ubiquinone biosynthesis. The protein is 3-demethoxyubiquinol 3-hydroxylase of Polaromonas sp. (strain JS666 / ATCC BAA-500).